We begin with the raw amino-acid sequence, 169 residues long: Peptide deformylase (169 aa).

2 residues coordinate Fe cation: C91 and H133. E134 is a catalytic residue. Residue H137 coordinates Fe cation.

This sequence belongs to the polypeptide deformylase family. Fe(2+) is required as a cofactor.

The catalysed reaction is N-terminal N-formyl-L-methionyl-[peptide] + H2O = N-terminal L-methionyl-[peptide] + formate. In terms of biological role, removes the formyl group from the N-terminal Met of newly synthesized proteins. Requires at least a dipeptide for an efficient rate of reaction. N-terminal L-methionine is a prerequisite for activity but the enzyme has broad specificity at other positions. This Haemophilus influenzae (strain ATCC 51907 / DSM 11121 / KW20 / Rd) protein is Peptide deformylase.